The sequence spans 88 residues: UPF0250 protein Shal_3239 (88 aa).

The protein belongs to the UPF0250 family.

This chain is UPF0250 protein Shal_3239, found in Shewanella halifaxensis (strain HAW-EB4).